A 241-amino-acid polypeptide reads, in one-letter code: 2,3,4,5-tetrahydropyridine-2,6-dicarboxylate N-acetyltransferase (241 aa).

The protein belongs to the transferase hexapeptide repeat family. DapH subfamily.

The catalysed reaction is (S)-2,3,4,5-tetrahydrodipicolinate + acetyl-CoA + H2O = L-2-acetamido-6-oxoheptanedioate + CoA. It functions in the pathway amino-acid biosynthesis; L-lysine biosynthesis via DAP pathway; LL-2,6-diaminopimelate from (S)-tetrahydrodipicolinate (acetylase route): step 1/3. Its function is as follows. Catalyzes the transfer of an acetyl group from acetyl-CoA to tetrahydrodipicolinate. This chain is 2,3,4,5-tetrahydropyridine-2,6-dicarboxylate N-acetyltransferase, found in Thermoanaerobacter sp. (strain X514).